The sequence spans 548 residues: Phenylalanine--tRNA ligase beta subunit (548 aa).

The region spanning 271–346 is the B5 domain; it reads LSEAAAKLDP…ISIGYEALGP (76 aa). Positions 324, 330, 333, and 334 each coordinate Mg(2+).

This sequence belongs to the phenylalanyl-tRNA synthetase beta subunit family. Type 2 subfamily. In terms of assembly, tetramer of two alpha and two beta subunits. It depends on Mg(2+) as a cofactor.

The protein resides in the cytoplasm. The enzyme catalyses tRNA(Phe) + L-phenylalanine + ATP = L-phenylalanyl-tRNA(Phe) + AMP + diphosphate + H(+). In Aeropyrum pernix (strain ATCC 700893 / DSM 11879 / JCM 9820 / NBRC 100138 / K1), this protein is Phenylalanine--tRNA ligase beta subunit.